The chain runs to 437 residues: Histidine--tRNA ligase (437 aa).

This sequence belongs to the class-II aminoacyl-tRNA synthetase family. In terms of assembly, homodimer.

It localises to the cytoplasm. It carries out the reaction tRNA(His) + L-histidine + ATP = L-histidyl-tRNA(His) + AMP + diphosphate + H(+). This chain is Histidine--tRNA ligase, found in Opitutus terrae (strain DSM 11246 / JCM 15787 / PB90-1).